Here is a 328-residue protein sequence, read N- to C-terminus: Tetraacyldisaccharide 4'-kinase (328 aa).

ATP is bound at residue 55-62 (TAGGNGKT).

The protein belongs to the LpxK family.

It catalyses the reaction a lipid A disaccharide + ATP = a lipid IVA + ADP + H(+). The protein operates within glycolipid biosynthesis; lipid IV(A) biosynthesis; lipid IV(A) from (3R)-3-hydroxytetradecanoyl-[acyl-carrier-protein] and UDP-N-acetyl-alpha-D-glucosamine: step 6/6. Transfers the gamma-phosphate of ATP to the 4'-position of a tetraacyldisaccharide 1-phosphate intermediate (termed DS-1-P) to form tetraacyldisaccharide 1,4'-bis-phosphate (lipid IVA). The sequence is that of Tetraacyldisaccharide 4'-kinase from Shigella boydii serotype 18 (strain CDC 3083-94 / BS512).